A 118-amino-acid chain; its full sequence is Protein YLR162W (118 aa).

The span at 1 to 20 (MQHTLTRTASLPERSSSAHS) shows a compositional bias: polar residues. The segment at 1–26 (MQHTLTRTASLPERSSSAHSAATALP) is disordered. The chain crosses the membrane as a helical span at residues 38-58 (LVPLLCIFWFVFVSMSPLPPA).

The protein resides in the membrane. Functionally, overexpression confers resistance to the antimicrobial peptide MiAMP1. This Saccharomyces cerevisiae (strain ATCC 204508 / S288c) (Baker's yeast) protein is Protein YLR162W.